Here is a 322-residue protein sequence, read N- to C-terminus: Protein lin-56 (322 aa).

The segment at 264 to 322 (SSQKLQQNGFPEKVEQMDKYSNKLKDEASDKKYEKPGKKDYVEEEGYWAPITDSEDDEA) is disordered. Basic and acidic residues predominate over residues 275 to 304 (EKVEQMDKYSNKLKDEASDKKYEKPGKKDY).

Widely expressed throughout embryonic development. Expressed in the six multipotent ventral ectodermal blast cells, P3.p-P8.p, which generate the vulva and in their descendants throughout vulval development.

It is found in the nucleus. In terms of biological role, required for translation, stability and/or localization of lin-15a. This chain is Protein lin-56 (lin-56), found in Caenorhabditis elegans.